A 145-amino-acid chain; its full sequence is Ribonuclease H (145 aa).

Residues Met1–Lys142 enclose the RNase H type-1 domain. The Mg(2+) site is built by Asp9, Glu47, Asp69, and Asp134.

This sequence belongs to the RNase H family. Monomer. Requires Mg(2+) as cofactor.

It is found in the cytoplasm. The catalysed reaction is Endonucleolytic cleavage to 5'-phosphomonoester.. Endonuclease that specifically degrades the RNA of RNA-DNA hybrids. In Caldicellulosiruptor saccharolyticus (strain ATCC 43494 / DSM 8903 / Tp8T 6331), this protein is Ribonuclease H.